Here is a 273-residue protein sequence, read N- to C-terminus: Proteasome subunit beta type-10 (273 aa).

Residue methionine 1 is modified to N-acetylmethionine. Positions 1 to 39 (MLKQAVEPTGGFSFENCQRNASLEHVLPGLRVPHARKTG) are cleaved as a propeptide — removed in mature form. Residue threonine 40 is the Nucleophile of the active site.

Belongs to the peptidase T1B family. As to quaternary structure, the 26S proteasome consists of a 20S proteasome core and two 19S regulatory subunits. The 20S proteasome core is composed of 28 subunits that are arranged in four stacked rings, resulting in a barrel-shaped structure. The two end rings are each formed by seven alpha subunits, and the two central rings are each formed by seven beta subunits. The catalytic chamber with the active sites is on the inside of the barrel. Component of the immunoproteasome, where it displaces the equivalent housekeeping subunit PSMB7. Component of the spermatoproteasome, a form of the proteasome specifically found in testis. Post-translationally, autocleaved. The resulting N-terminal Thr residue of the mature subunit is responsible for the nucleophile proteolytic activity. Detected in liver (at protein level).

Its subcellular location is the cytoplasm. It localises to the nucleus. The catalysed reaction is Cleavage of peptide bonds with very broad specificity.. Its function is as follows. The proteasome is a multicatalytic proteinase complex which is characterized by its ability to cleave peptides with Arg, Phe, Tyr, Leu, and Glu adjacent to the leaving group at neutral or slightly basic pH. The proteasome has an ATP-dependent proteolytic activity. This subunit is involved in antigen processing to generate class I binding peptides. Plays a role in determining the T-cell repertoire for an antiviral T-cell response. This is Proteasome subunit beta type-10 (Psmb10) from Mus musculus (Mouse).